Consider the following 144-residue polypeptide: Protein archease (144 aa).

Aspartate 14, aspartate 143, and isoleucine 144 together coordinate Ca(2+).

This sequence belongs to the archease family.

Its function is as follows. Activates the tRNA-splicing ligase complex by facilitating the enzymatic turnover of catalytic subunit RtcB. Acts by promoting the guanylylation of RtcB, a key intermediate step in tRNA ligation. Can also alter the NTP specificity of RtcB such that ATP, dGTP or ITP is used efficiently. The protein is Protein archease of Aeropyrum pernix (strain ATCC 700893 / DSM 11879 / JCM 9820 / NBRC 100138 / K1).